Here is a 310-residue protein sequence, read N- to C-terminus: Methionyl-tRNA formyltransferase (310 aa).

Residue 110–113 (SLLP) participates in (6S)-5,6,7,8-tetrahydrofolate binding.

This sequence belongs to the Fmt family.

The catalysed reaction is L-methionyl-tRNA(fMet) + (6R)-10-formyltetrahydrofolate = N-formyl-L-methionyl-tRNA(fMet) + (6S)-5,6,7,8-tetrahydrofolate + H(+). Functionally, attaches a formyl group to the free amino group of methionyl-tRNA(fMet). The formyl group appears to play a dual role in the initiator identity of N-formylmethionyl-tRNA by promoting its recognition by IF2 and preventing the misappropriation of this tRNA by the elongation apparatus. The protein is Methionyl-tRNA formyltransferase of Streptomyces coelicolor (strain ATCC BAA-471 / A3(2) / M145).